We begin with the raw amino-acid sequence, 106 residues long: Immunoglobulin lambda constant 2 (106 aa).

The Ig-like domain maps to 7-101; that stretch reads PSVTLFPPSS…EGSTVEKTVA (95 aa). Cysteines 28 and 87 form a disulfide.

In terms of assembly, immunoglobulins are composed of two identical heavy chains and two identical light chains; disulfide-linked.

It is found in the secreted. Its subcellular location is the cell membrane. Functionally, constant region of immunoglobulin light chains. Immunoglobulins, also known as antibodies, are membrane-bound or secreted glycoproteins produced by B lymphocytes. In the recognition phase of humoral immunity, the membrane-bound immunoglobulins serve as receptors which, upon binding of a specific antigen, trigger the clonal expansion and differentiation of B lymphocytes into immunoglobulins-secreting plasma cells. Secreted immunoglobulins mediate the effector phase of humoral immunity, which results in the elimination of bound antigens. The antigen binding site is formed by the variable domain of one heavy chain, together with that of its associated light chain. Thus, each immunoglobulin has two antigen binding sites with remarkable affinity for a particular antigen. The variable domains are assembled by a process called V-(D)-J rearrangement and can then be subjected to somatic hypermutations which, after exposure to antigen and selection, allow affinity maturation for a particular antigen. This Homo sapiens (Human) protein is Immunoglobulin lambda constant 2.